We begin with the raw amino-acid sequence, 449 residues long: Phosphoglucosamine mutase (449 aa).

S101 acts as the Phosphoserine intermediate in catalysis. Residues S101, D242, D244, and D246 each contribute to the Mg(2+) site. The residue at position 101 (S101) is a Phosphoserine.

The protein belongs to the phosphohexose mutase family. The cofactor is Mg(2+). In terms of processing, activated by phosphorylation.

It carries out the reaction alpha-D-glucosamine 1-phosphate = D-glucosamine 6-phosphate. In terms of biological role, catalyzes the conversion of glucosamine-6-phosphate to glucosamine-1-phosphate. The protein is Phosphoglucosamine mutase of Hyphomonas neptunium (strain ATCC 15444).